The sequence spans 383 residues: Chaperone protein DnaJ (383 aa).

Positions 5-69 constitute a J domain; it reads DYYDILGVSK…QKRAQYDQFG (65 aa). The segment at 138 to 222 adopts a CR-type zinc-finger fold; sequence GKTTTIKYDR…CHGAGHVHER (85 aa). Zn(2+)-binding residues include Cys151, Cys154, Cys168, Cys171, Cys194, Cys197, Cys210, and Cys213. CXXCXGXG motif repeat units follow at residues 151–158, 168–175, 194–201, and 210–217; these read CKTCHGTG, CPRCHGAG, CPECNGTG, and CDTCHGAG.

It belongs to the DnaJ family. In terms of assembly, homodimer. It depends on Zn(2+) as a cofactor.

Its subcellular location is the cytoplasm. Functionally, participates actively in the response to hyperosmotic and heat shock by preventing the aggregation of stress-denatured proteins and by disaggregating proteins, also in an autonomous, DnaK-independent fashion. Unfolded proteins bind initially to DnaJ; upon interaction with the DnaJ-bound protein, DnaK hydrolyzes its bound ATP, resulting in the formation of a stable complex. GrpE releases ADP from DnaK; ATP binding to DnaK triggers the release of the substrate protein, thus completing the reaction cycle. Several rounds of ATP-dependent interactions between DnaJ, DnaK and GrpE are required for fully efficient folding. Also involved, together with DnaK and GrpE, in the DNA replication of plasmids through activation of initiation proteins. The polypeptide is Chaperone protein DnaJ (Limosilactobacillus reuteri (strain DSM 20016) (Lactobacillus reuteri)).